We begin with the raw amino-acid sequence, 475 residues long: DNA-binding protein D-ETS-6 (475 aa).

The interval S42–P150 is disordered. Low complexity predominate over residues S70–P108. Positions V109–V121 are enriched in pro residues. Residues S122 to V144 are compositionally biased toward low complexity. Residues R132–A219 form the PNT domain. The segment at residues I255–D335 is a DNA-binding region (ETS). Residues G350–N475 are disordered. Basic residues predominate over residues P375–H388. The segment covering S401–S436 has biased composition (low complexity). Positions R453 to N475 are enriched in polar residues.

It belongs to the ETS family. Embryonic ventral nervous system and 1 pair of neurons in each thoracic segment.

It localises to the nucleus. This Drosophila melanogaster (Fruit fly) protein is DNA-binding protein D-ETS-6 (Ets21C).